The chain runs to 290 residues: Xyloglucan endotransglycosylase/hydrolase protein 8 (290 aa).

Positions 1–25 (MAKHLALSVAAAVAVSWLAASSAAA) are cleaved as a signal peptide. The 193-residue stretch at 26 to 218 (AGFYEKFDVV…WSGAPFVVSY (193 aa)) folds into the GH16 domain. E106 functions as the Nucleophile in the catalytic mechanism. The Proton donor role is filled by E110. E110 is a xyloglucan binding site. N-linked (GlcNAc...) asparagine glycosylation is present at N114. Residues 123-125 (NTN), 133-135 (KKE), and 197-198 (YW) contribute to the xyloglucan site. 2 cysteine pairs are disulfide-bonded: C226-C240 and C273-C287. R278 contributes to the xyloglucan binding site.

This sequence belongs to the glycosyl hydrolase 16 family. XTH group 2 subfamily. Post-translationally, contains at least one intrachain disulfide bond essential for its enzymatic activity. As to expression, transcript strongly detected in leaf sheaths. Weakly or not expressed in leaf blades, roots and calli. Accumulation of transcript detected in shoot apex meristem, vascular tissues, young leaves, vascular bundles of leaf sheaths, and peripheral cylinder of the vascular bundles and fibers in the nodal region.

It localises to the secreted. The protein resides in the cell wall. Its subcellular location is the extracellular space. The protein localises to the apoplast. The catalysed reaction is breaks a beta-(1-&gt;4) bond in the backbone of a xyloglucan and transfers the xyloglucanyl segment on to O-4 of the non-reducing terminal glucose residue of an acceptor, which can be a xyloglucan or an oligosaccharide of xyloglucan.. Its function is as follows. Catalyzes xyloglucan endohydrolysis (XEH) and/or endotransglycosylation (XET). Cleaves and religates xyloglucan polymers, an essential constituent of the primary cell wall, and thereby participates in cell wall construction of growing tissues. May promote elongation of three internodes (II, III and IV) and may be involved in cell elongation processes. This chain is Xyloglucan endotransglycosylase/hydrolase protein 8 (XTH8), found in Oryza sativa subsp. japonica (Rice).